Here is a 207-residue protein sequence, read N- to C-terminus: Urease accessory protein UreG (207 aa).

Residue 14–21 participates in GTP binding; it reads GPVGSGKT.

It belongs to the SIMIBI class G3E GTPase family. UreG subfamily. As to quaternary structure, homodimer. UreD, UreF and UreG form a complex that acts as a GTP-hydrolysis-dependent molecular chaperone, activating the urease apoprotein by helping to assemble the nickel containing metallocenter of UreC. The UreE protein probably delivers the nickel.

The protein resides in the cytoplasm. Its function is as follows. Facilitates the functional incorporation of the urease nickel metallocenter. This process requires GTP hydrolysis, probably effectuated by UreG. The polypeptide is Urease accessory protein UreG (Pseudomonas putida (strain GB-1)).